Here is a 628-residue protein sequence, read N- to C-terminus: ATP-dependent zinc metalloprotease FtsH (628 aa).

At 1–7 (MKLSWKT) the chain is on the stromal side. Residues 8-28 (LLLWSLPIFVVGFFFWQGFLG) traverse the membrane as a helical segment. Residues 29–118 (PTTTDVGSNI…AHPPKSTSAV (90 aa)) lie on the Lumenal side of the membrane. The chain crosses the membrane as a helical span at residues 119–139 (WGLLGNLLFPLILVGGLAFLF). The Stromal segment spans residues 140-628 (RRSNNASGGP…PEKNYYISQF (489 aa)). 213–220 (GPPGTGKT) contributes to the ATP binding site. Position 434 (H434) interacts with Zn(2+). Residue E435 is part of the active site. 2 residues coordinate Zn(2+): H438 and D512.

It in the central section; belongs to the AAA ATPase family. This sequence in the C-terminal section; belongs to the peptidase M41 family. Homohexamer. Zn(2+) serves as cofactor.

The protein localises to the plastid. The protein resides in the chloroplast thylakoid membrane. Its function is as follows. Acts as a processive, ATP-dependent zinc metallopeptidase. The protein is ATP-dependent zinc metalloprotease FtsH of Porphyra purpurea (Red seaweed).